Consider the following 159-residue polypeptide: MTGSILRRAPLLGVAGLVVLVDQATKLLAASQLADGRIVQLLPGLINGQLVHNTGAAFSLFRGSVQWLGLLSLAVTTGLLIWVVRHRTPPFWQGMAVAFLLGGTLGNGIDRWRLGHVIDFLALVPINFPIFNPADIAINLAVLCFLVDLWSSRTSSRHG.

The next 2 helical transmembrane spans lie at 64-84 and 89-109; these read SVQWLGLLSLAVTTGLLIWVV and PPFWQGMAVAFLLGGTLGNGI. Active-site residues include aspartate 119 and aspartate 135. A helical membrane pass occupies residues 130-150; it reads IFNPADIAINLAVLCFLVDLW.

The protein belongs to the peptidase A8 family.

Its subcellular location is the cell inner membrane. It carries out the reaction Release of signal peptides from bacterial membrane prolipoproteins. Hydrolyzes -Xaa-Yaa-Zaa-|-(S,diacylglyceryl)Cys-, in which Xaa is hydrophobic (preferably Leu), and Yaa (Ala or Ser) and Zaa (Gly or Ala) have small, neutral side chains.. It participates in protein modification; lipoprotein biosynthesis (signal peptide cleavage). Its function is as follows. This protein specifically catalyzes the removal of signal peptides from prolipoproteins. This Parasynechococcus marenigrum (strain WH8102) protein is Lipoprotein signal peptidase.